A 448-amino-acid polypeptide reads, in one-letter code: Argininosuccinate synthase (448 aa).

ATP contacts are provided by residues 17-25 and Ala-43; that span reads AFSGGLDTS. Tyr-99 lines the L-citrulline pocket. The ATP site is built by Gly-129 and Thr-131. The L-aspartate site is built by Thr-131, Asn-135, and Asp-136. L-citrulline is bound at residue Asn-135. Asp-136 is an ATP binding site. Positions 139 and 192 each coordinate L-citrulline. ATP is bound at residue Asp-194. L-citrulline contacts are provided by Thr-201, Glu-203, and Glu-280.

Belongs to the argininosuccinate synthase family. Type 2 subfamily. As to quaternary structure, homotetramer.

Its subcellular location is the cytoplasm. It catalyses the reaction L-citrulline + L-aspartate + ATP = 2-(N(omega)-L-arginino)succinate + AMP + diphosphate + H(+). It functions in the pathway amino-acid biosynthesis; L-arginine biosynthesis; L-arginine from L-ornithine and carbamoyl phosphate: step 2/3. The chain is Argininosuccinate synthase from Acidovorax ebreus (strain TPSY) (Diaphorobacter sp. (strain TPSY)).